The chain runs to 365 residues: uncharacterized protein (365 aa).

31 to 38 (GPINSGKT) is a binding site for ATP.

The protein belongs to the archaeal ATPase family.

This is an uncharacterized protein from Methanocaldococcus jannaschii (strain ATCC 43067 / DSM 2661 / JAL-1 / JCM 10045 / NBRC 100440) (Methanococcus jannaschii).